We begin with the raw amino-acid sequence, 450 residues long: Glucose-6-phosphate isomerase (450 aa).

Glu-291 functions as the Proton donor in the catalytic mechanism. Catalysis depends on residues His-312 and Lys-426.

It belongs to the GPI family.

Its subcellular location is the cytoplasm. It catalyses the reaction alpha-D-glucose 6-phosphate = beta-D-fructose 6-phosphate. The protein operates within carbohydrate biosynthesis; gluconeogenesis. Its pathway is carbohydrate degradation; glycolysis; D-glyceraldehyde 3-phosphate and glycerone phosphate from D-glucose: step 2/4. Its function is as follows. Catalyzes the reversible isomerization of glucose-6-phosphate to fructose-6-phosphate. The protein is Glucose-6-phosphate isomerase of Clostridium botulinum (strain Langeland / NCTC 10281 / Type F).